Consider the following 398-residue polypeptide: 1-deoxy-D-xylulose 5-phosphate reductoisomerase (398 aa).

The NADPH site is built by Thr-11, Gly-12, Ser-13, Ile-14, Arg-38, Asn-39, and Asn-125. Lys-126 contributes to the 1-deoxy-D-xylulose 5-phosphate binding site. Glu-127 lines the NADPH pocket. Asp-151 lines the Mn(2+) pocket. Positions 152, 153, 179, and 202 each coordinate 1-deoxy-D-xylulose 5-phosphate. Glu-153 is a Mn(2+) binding site. Position 208 (Gly-208) interacts with NADPH. 1-deoxy-D-xylulose 5-phosphate is bound by residues Ser-215, Asn-220, Lys-221, and Glu-224. A Mn(2+)-binding site is contributed by Glu-224.

The protein belongs to the DXR family. It depends on Mg(2+) as a cofactor. The cofactor is Mn(2+).

It carries out the reaction 2-C-methyl-D-erythritol 4-phosphate + NADP(+) = 1-deoxy-D-xylulose 5-phosphate + NADPH + H(+). The protein operates within isoprenoid biosynthesis; isopentenyl diphosphate biosynthesis via DXP pathway; isopentenyl diphosphate from 1-deoxy-D-xylulose 5-phosphate: step 1/6. Catalyzes the NADPH-dependent rearrangement and reduction of 1-deoxy-D-xylulose-5-phosphate (DXP) to 2-C-methyl-D-erythritol 4-phosphate (MEP). This Burkholderia vietnamiensis (strain G4 / LMG 22486) (Burkholderia cepacia (strain R1808)) protein is 1-deoxy-D-xylulose 5-phosphate reductoisomerase.